A 139-amino-acid chain; its full sequence is Ribonuclease P protein component (139 aa).

The disordered stretch occupies residues 116–139 (FSKNKSTIGGEYSPKNEQCESELP).

The protein belongs to the RnpA family. In terms of assembly, consists of a catalytic RNA component (M1 or rnpB) and a protein subunit.

The enzyme catalyses Endonucleolytic cleavage of RNA, removing 5'-extranucleotides from tRNA precursor.. In terms of biological role, RNaseP catalyzes the removal of the 5'-leader sequence from pre-tRNA to produce the mature 5'-terminus. It can also cleave other RNA substrates such as 4.5S RNA. The protein component plays an auxiliary but essential role in vivo by binding to the 5'-leader sequence and broadening the substrate specificity of the ribozyme. The polypeptide is Ribonuclease P protein component (Chlamydia abortus (strain DSM 27085 / S26/3) (Chlamydophila abortus)).